Reading from the N-terminus, the 334-residue chain is Terpene synthase 1 (334 aa).

Mg(2+) contacts are provided by D82 and D86. A D(D/E)XX(D/E) motif motif is present at residues 82–86 (DDIFD). R184 provides a ligand contact to substrate. The Mg(2+) site is built by N230, S234, and E238. Residues 230–238 (NDIYSYHRE) carry the NSE motif motif. Residues 309 to 316 (WSESCTRY) carry the WxxxxxRY motif motif.

This sequence belongs to the terpene synthase family. It depends on Mg(2+) as a cofactor.

The enzyme catalyses (2E,6E)-farnesyl diphosphate = gamma-muurolene + diphosphate. It catalyses the reaction (2E,6E)-farnesyl diphosphate = alpha-muurolene + diphosphate. The catalysed reaction is (2E,6E)-farnesyl diphosphate = (-)-(E)-beta-caryophyllene + diphosphate. It carries out the reaction (2E)-geranyl diphosphate = beta-myrcene + diphosphate. Terpene synthase that catalyzes the cyclization of farnesyl diphosphate (FPP) into a mixture of sesquiterpenes with gamma-muurolene as the most abundant compound and (-)-beta-caryophyllene, alpha-muurolene, and 4 unidentified sesquiterpenes as minor compoundss. TPS1 also shows monoterpene synthase activity and can also use geranyl diphosphate (GPP) as a substrate to convert it into a mixture of cyclic and acyclic monoterpenes, including myrcene and linalool. P.polycephalum has a unique biology and these volatile terpenoids could function in internal communication of P.polycephalum, to mark the territory that have been explored, or they may be involved in chemotaxis. The protein is Terpene synthase 1 of Physarum polycephalum (Slime mold).